Consider the following 184-residue polypeptide: Ras-related protein Rap-1b-like protein (184 aa).

Residue 10-18 coordinates GTP; it reads GSRGVGKSA. Positions 32-40 match the Effector region motif; sequence YDPTIEDSY. Residues 57 to 61, 116 to 119, and 147 to 149 each bind GTP; these read DTAGT, NKCD, and SAK. Cys181 carries the S-geranylgeranyl cysteine lipid modification. Residues 182-184 constitute a propeptide, removed in mature form; the sequence is QLL.

The protein belongs to the small GTPase superfamily. Ras family.

The protein resides in the cell membrane. It is found in the cytoplasm. It localises to the cytosol. It catalyses the reaction GTP + H2O = GDP + phosphate + H(+). Functionally, probable GTP-binding protein with intrinsic GTPase activity. This chain is Ras-related protein Rap-1b-like protein, found in Homo sapiens (Human).